Reading from the N-terminus, the 902-residue chain is Protein translocase subunit SecA (902 aa).

ATP is bound by residues Gln85, 103–107 (GEGKT), and Asp492. The interval 846–902 (LSYSGGGEEPNQRPKSPRRRSERKIGPNEPCPCGSGKKFKKCHGRVGAPPLPTSQSQ) is disordered. Zn(2+)-binding residues include Cys876, Cys878, Cys887, and His888.

It belongs to the SecA family. Monomer and homodimer. Part of the essential Sec protein translocation apparatus which comprises SecA, SecYEG and auxiliary proteins SecDF. Other proteins may also be involved. The cofactor is Zn(2+).

The protein localises to the cell membrane. It is found in the cytoplasm. It catalyses the reaction ATP + H2O + cellular proteinSide 1 = ADP + phosphate + cellular proteinSide 2.. Its function is as follows. Part of the Sec protein translocase complex. Interacts with the SecYEG preprotein conducting channel. Has a central role in coupling the hydrolysis of ATP to the transfer of proteins into and across the cell membrane, serving as an ATP-driven molecular motor driving the stepwise translocation of polypeptide chains across the membrane. This is Protein translocase subunit SecA from Rubrobacter xylanophilus (strain DSM 9941 / JCM 11954 / NBRC 16129 / PRD-1).